The primary structure comprises 128 residues: Large ribosomal subunit protein bL17 (128 aa).

It belongs to the bacterial ribosomal protein bL17 family. As to quaternary structure, part of the 50S ribosomal subunit. Contacts protein L32.

This chain is Large ribosomal subunit protein bL17, found in Pseudomonas fluorescens (strain ATCC BAA-477 / NRRL B-23932 / Pf-5).